The primary structure comprises 499 residues: Tektin-like protein 1 (499 aa).

Position 14 is a phosphoserine (serine 14). Positions tryptophan 201–lysine 225 form a coiled coil. Positions valine 265–isoleucine 286 are disordered. Positions lysine 308–isoleucine 328 form a coiled coil. Phosphotyrosine is present on tyrosine 372.

Microtubule inner protein component of sperm flagellar doublet microtubules.

It localises to the cytoplasm. The protein localises to the cytoskeleton. It is found in the flagellum axoneme. Microtubule inner protein (MIP) part of the dynein-decorated doublet microtubules (DMTs) in sperm flagellar axoneme, which is required for motile flagellum beating. Forms an extensive interaction network cross-linking the lumen of axonemal doublet microtubules. The polypeptide is Tektin-like protein 1 (Mus musculus (Mouse)).